Consider the following 453-residue polypeptide: Cytochrome b-c1 complex subunit 2, mitochondrial (453 aa).

The N-terminal 14 residues, 1-14, are a transit peptide targeting the mitochondrion; that stretch reads MKLLTRAGSLSRFY. N6-acetyllysine is present on residues K66, K199, and K250.

The protein belongs to the peptidase M16 family. UQCRC2/QCR2 subfamily. As to quaternary structure, component of the ubiquinol-cytochrome c oxidoreductase (cytochrome b-c1 complex, complex III, CIII), a multisubunit enzyme composed of 11 subunits. The complex is composed of 3 respiratory subunits cytochrome b, cytochrome c1 and Rieske protein UQCRFS1, 2 core protein subunits UQCRC1/QCR1 and UQCRC2/QCR2, and 6 low-molecular weight protein subunits UQCRH/QCR6, UQCRB/QCR7, UQCRQ/QCR8, UQCR10/QCR9, UQCR11/QCR10 and subunit 9, the cleavage product of Rieske protein UQCRFS1. The complex exists as an obligatory dimer and forms supercomplexes (SCs) in the inner mitochondrial membrane with NADH-ubiquinone oxidoreductase (complex I, CI) and cytochrome c oxidase (complex IV, CIV), resulting in different assemblies (supercomplex SCI(1)III(2)IV(1) and megacomplex MCI(2)III(2)IV(2)). Interacts with RAB5IF. Interacts with STMP1.

The protein resides in the mitochondrion inner membrane. Its function is as follows. Component of the ubiquinol-cytochrome c oxidoreductase, a multisubunit transmembrane complex that is part of the mitochondrial electron transport chain which drives oxidative phosphorylation. The respiratory chain contains 3 multisubunit complexes succinate dehydrogenase (complex II, CII), ubiquinol-cytochrome c oxidoreductase (cytochrome b-c1 complex, complex III, CIII) and cytochrome c oxidase (complex IV, CIV), that cooperate to transfer electrons derived from NADH and succinate to molecular oxygen, creating an electrochemical gradient over the inner membrane that drives transmembrane transport and the ATP synthase. The cytochrome b-c1 complex catalyzes electron transfer from ubiquinol to cytochrome c, linking this redox reaction to translocation of protons across the mitochondrial inner membrane, with protons being carried across the membrane as hydrogens on the quinol. In the process called Q cycle, 2 protons are consumed from the matrix, 4 protons are released into the intermembrane space and 2 electrons are passed to cytochrome c. The 2 core subunits UQCRC1/QCR1 and UQCRC2/QCR2 are homologous to the 2 mitochondrial-processing peptidase (MPP) subunits beta-MPP and alpha-MPP respectively, and they seem to have preserved their MPP processing properties. May be involved in the in situ processing of UQCRFS1 into the mature Rieske protein and its mitochondrial targeting sequence (MTS)/subunit 9 when incorporated into complex III. In Bos taurus (Bovine), this protein is Cytochrome b-c1 complex subunit 2, mitochondrial (UQCRC2).